Here is a 206-residue protein sequence, read N- to C-terminus: MSTKKRRLLKVIILGDSGVGKTSLMNQYVQKKFTKEYKATIGADFLTKEIEVDDKKVTMQIWDTAGQERFQSLGSAFYRGADCCVLVFDVNNAKSFDDLDNWRDEFIIQAGPPDPDNFPFMVLGNKIDENGGSSRQVSEKKAKAWCASKGSIPYFETSAKEDINVEAAFTCITRNALRNEKEEELFMPDAVDMNTTATQRKRAGCC.

15 to 22 (GDSGVGKT) contributes to the GTP binding site. An Effector region motif is present at residues 37–45 (YKATIGADF). GTP is bound by residues 63–67 (DTAGQ) and 125–128 (NKID). Residues C205 and C206 are each lipidated (S-geranylgeranyl cysteine).

This sequence belongs to the small GTPase superfamily. Rab family.

The protein localises to the cell membrane. Functionally, protein transport. Probably involved in vesicular traffic. This chain is GTP-binding protein YPTC5 (YPTC5), found in Chlamydomonas reinhardtii (Chlamydomonas smithii).